The chain runs to 483 residues: GTPase Der (483 aa).

EngA-type G domains are found at residues 3 to 167 (FTLA…GEER) and 212 to 387 (LRIA…EIWN). GTP contacts are provided by residues 9–16 (GRPNVGKS), 56–60 (DTAGL), 119–122 (NKAE), 218–225 (GRPNAGKS), 265–269 (DTAGM), and 330–333 (NKWD). One can recognise a KH-like domain in the interval 388-472 (RRISTGRLNR…PIRLSLRTSD (85 aa)).

Belongs to the TRAFAC class TrmE-Era-EngA-EngB-Septin-like GTPase superfamily. EngA (Der) GTPase family. In terms of assembly, associates with the 50S ribosomal subunit.

In terms of biological role, GTPase that plays an essential role in the late steps of ribosome biogenesis. This chain is GTPase Der, found in Brucella suis (strain ATCC 23445 / NCTC 10510).